Consider the following 227-residue polypeptide: Sensory transduction protein RegX3 (227 aa).

One can recognise a Response regulatory domain in the interval 3-116 (SVLIVEDEES…ELIARIRAVL (114 aa)). A 4-aspartylphosphate modification is found at Asp-52. Residues 128–227 (DGVLESGPVR…VRGLGYKLEG (100 aa)) constitute a DNA-binding region (ompR/PhoB-type).

Phosphorylated by SenX3.

Its function is as follows. Member of the two-component regulatory system SenX3/RegX3. Specifically binds to the promoter region of the senX3-regX3 operon. The chain is Sensory transduction protein RegX3 from Mycobacterium bovis (strain ATCC BAA-935 / AF2122/97).